The following is a 349-amino-acid chain: Protein RecA (349 aa).

ATP is bound at residue 65–72 (GPESSGKT).

The protein belongs to the RecA family.

The protein localises to the cytoplasm. Its function is as follows. Can catalyze the hydrolysis of ATP in the presence of single-stranded DNA, the ATP-dependent uptake of single-stranded DNA by duplex DNA, and the ATP-dependent hybridization of homologous single-stranded DNAs. It interacts with LexA causing its activation and leading to its autocatalytic cleavage. This chain is Protein RecA, found in Enterococcus faecium (Streptococcus faecium).